A 515-amino-acid chain; its full sequence is MNFQSNISAFLEDSLSHHTIPIVETFTVDTLTPIQMIEKLDREITYLLESKDDTSTWSRYSFIGLNPFLTIKEEQGRFSAADQDSKSLYTGNELKEVLNWMNTTYKIKTPELGIPFVGGAVGYLSYDMIPLIEPSVPSHTKETDMEKCMLFVCRTLIAYDHETKNVHFIQYARLTGEETKNEKMDVFHQNHLELQNLIEKMMDQKNIKELFLSADSYKTPSFETVSSNYEKSAFMADVEKIKSYIKAGDIFQGVLSQKFEVPIKADAFELYRVLRIVNPSPYMYYMKLLDREIVGSSPERLIHVQDGHLEIHPIAGTRKRGADKAEDERLKVELMKDEKEKAEHYMLVDLARNDIGRVAEYGSVSVPEFTKIVSFSHVMHIISVVTGRLKKGVHPVDALMSAFPAGTLTGAPKIRAMQLLQELEPTPRETYGGCIAYIGFDGNIDSCITIRTMSVKNGVASIQAGAGIVADSVPEAEYEESCNKAGALLKTIHIAEDMFHSKEDKADEQISTIVR.

L-tryptophan is bound by residues serine 50 and 281-283 (PYM). 316–317 (GT) is a binding site for chorismate. Glutamate 343 provides a ligand contact to Mg(2+). Residues tyrosine 431, arginine 451, 465 to 467 (GAG), and glycine 467 contribute to the chorismate site. Position 480 (glutamate 480) interacts with Mg(2+).

Belongs to the anthranilate synthase component I family. As to quaternary structure, heterotetramer consisting of two non-identical subunits: a beta subunit (TrpG) and a large alpha subunit (TrpE). Requires Mg(2+) as cofactor.

It carries out the reaction chorismate + L-glutamine = anthranilate + pyruvate + L-glutamate + H(+). Its pathway is amino-acid biosynthesis; L-tryptophan biosynthesis; L-tryptophan from chorismate: step 1/5. Feedback inhibited by tryptophan. Functionally, part of a heterotetrameric complex that catalyzes the two-step biosynthesis of anthranilate, an intermediate in the biosynthesis of L-tryptophan. In the first step, the glutamine-binding beta subunit (TrpG) of anthranilate synthase (AS) provides the glutamine amidotransferase activity which generates ammonia as a substrate that, along with chorismate, is used in the second step, catalyzed by the large alpha subunit of AS (TrpE) to produce anthranilate. In the absence of TrpG, TrpE can synthesize anthranilate directly from chorismate and high concentrations of ammonia. In Bacillus subtilis (strain 168), this protein is Anthranilate synthase component 1 (trpE).